Consider the following 229-residue polypeptide: 2-C-methyl-D-erythritol 4-phosphate cytidylyltransferase (229 aa).

The protein belongs to the IspD/TarI cytidylyltransferase family. IspD subfamily.

It carries out the reaction 2-C-methyl-D-erythritol 4-phosphate + CTP + H(+) = 4-CDP-2-C-methyl-D-erythritol + diphosphate. The protein operates within isoprenoid biosynthesis; isopentenyl diphosphate biosynthesis via DXP pathway; isopentenyl diphosphate from 1-deoxy-D-xylulose 5-phosphate: step 2/6. In terms of biological role, catalyzes the formation of 4-diphosphocytidyl-2-C-methyl-D-erythritol from CTP and 2-C-methyl-D-erythritol 4-phosphate (MEP). The protein is 2-C-methyl-D-erythritol 4-phosphate cytidylyltransferase of Bacillus pumilus (strain SAFR-032).